Reading from the N-terminus, the 486-residue chain is mRNA cap guanine-N(7) methyltransferase (486 aa).

A disordered region spans residues 1–92 (MAGGADLDEP…ADRKAARERA (92 aa)). Composition is skewed to basic and acidic residues over residues 9-28 (EPPRQSDSTTDRKRPADSTH), 35-54 (VPRDRAGNKTYDISKLEPAR), and 82-92 (EADRKAARERA). One can recognise an mRNA cap 0 methyltransferase domain in the interval 135 to 486 (SRIKGLRSFN…FYVGFCFYKV (352 aa)). Residue 144–145 (NN) participates in mRNA binding. S-adenosyl-L-methionine contacts are provided by residues lysine 148, glycine 177, aspartate 201, aspartate 247, 281 to 283 (MFC), and tyrosine 286. A compositionally biased stretch (basic and acidic residues) spans 333–351 (VEMKKKQAEAGDGSKKDDG). The disordered stretch occupies residues 333–365 (VEMKKKQAEAGDGSKKDDGGDAEEGELDEPEVE). The segment covering 352–363 (GDAEEGELDEPE) has biased composition (acidic residues).

This sequence belongs to the class I-like SAM-binding methyltransferase superfamily. mRNA cap 0 methyltransferase family.

It localises to the nucleus. It carries out the reaction a 5'-end (5'-triphosphoguanosine)-ribonucleoside in mRNA + S-adenosyl-L-methionine = a 5'-end (N(7)-methyl 5'-triphosphoguanosine)-ribonucleoside in mRNA + S-adenosyl-L-homocysteine. In terms of biological role, responsible for methylating the 5'-cap structure of mRNAs. This Pyricularia oryzae (strain 70-15 / ATCC MYA-4617 / FGSC 8958) (Rice blast fungus) protein is mRNA cap guanine-N(7) methyltransferase (ABD1).